Consider the following 547-residue polypeptide: Apolipoprotein N-acyltransferase (547 aa).

A run of 5 helical transmembrane segments spans residues 31–51 (ILSG…ALIF), 71–91 (FWAG…WIAY), 106–126 (LALL…VAAG), 180–200 (LVGF…MGYV), and 210–230 (ALSH…WGFW). Residues 247–515 (VQANIGNLEK…KYLKNAPLTF (269 aa)) form the CN hydrolase domain. Glu294 (proton acceptor) is an active-site residue. The active site involves Lys364. The active-site Nucleophile is Cys418. The helical transmembrane segment at 515 to 535 (FFVQWGHWDWIVILLVLGAVI) threads the bilayer.

The protein belongs to the CN hydrolase family. Apolipoprotein N-acyltransferase subfamily.

The protein localises to the cell inner membrane. The catalysed reaction is N-terminal S-1,2-diacyl-sn-glyceryl-L-cysteinyl-[lipoprotein] + a glycerophospholipid = N-acyl-S-1,2-diacyl-sn-glyceryl-L-cysteinyl-[lipoprotein] + a 2-acyl-sn-glycero-3-phospholipid + H(+). It participates in protein modification; lipoprotein biosynthesis (N-acyl transfer). In terms of biological role, catalyzes the phospholipid dependent N-acylation of the N-terminal cysteine of apolipoprotein, the last step in lipoprotein maturation. This chain is Apolipoprotein N-acyltransferase, found in Bdellovibrio bacteriovorus (strain ATCC 15356 / DSM 50701 / NCIMB 9529 / HD100).